A 569-amino-acid polypeptide reads, in one-letter code: Protein GPR108 (569 aa).

Positions M1–G34 are cleaved as a signal peptide. N59, N111, and N182 each carry an N-linked (GlcNAc...) asparagine glycan. Residues L144–V219 form a disordered region. Polar residues predominate over residues K180–K192. Positions T194–E203 are enriched in basic and acidic residues. 2 N-linked (GlcNAc...) asparagine glycosylation sites follow: N226 and N230. 7 helical membrane passes run L289–C309, I318–I338, L362–V382, I393–S413, I427–I447, V475–V495, and W499–G519.

This sequence belongs to the LU7TM family. In terms of tissue distribution, high expression in spleen, lung, stomach, large and small intestine, and thymus.

It localises to the golgi apparatus. It is found in the cis-Golgi network membrane. The protein localises to the trans-Golgi network membrane. Its subcellular location is the golgi apparatus membrane. Its function is as follows. May play a role in intracellular immune modulation by activating NF-kappaB response and attenuating Toll-like-receptor response. (Microbial infection) Plays an essential function in adeno-associated virus (AAV) transduction, across multiple serotypes except AAV5. May play a critical role in mediating the endosomal virus escape or in the AAV virions trafficking from endosomes to the nucleus. The chain is Protein GPR108 (Gpr108) from Mus musculus (Mouse).